The sequence spans 601 residues: Serine/threonine-protein phosphatase 2A 65 kDa regulatory subunit A beta isoform (601 aa).

N-acetylalanine is present on Ala2. 15 HEAT repeats span residues 20 to 58 (DSLY…GVER), 59 to 96 (TRTE…GGPD), 97 to 135 (FAHC…TPVA), 136 to 173 (LEAH…ASNA), 174 to 212 (VKAE…ELDS), 213 to 251 (VKTE…SQDD), 252 to 290 (LEAL…GPKI), 291 to 333 (ALSD…RETV), 334 to 372 (IMNQ…GKEN), 373 to 411 (TIEH…GIRQ), 412 to 450 (LSQS…GVEF), 451 to 489 (FDEK…GTEW), 490 to 528 (AQNT…GKEI), 529 to 567 (TTKQ…DTNA), and 568 to 601 (LQGE…LALA).

The protein belongs to the phosphatase 2A regulatory subunit A family. As to quaternary structure, PP2A consists of a common heterodimeric core enzyme, composed of a 36 kDa catalytic subunit (subunit C) and a 65 kDa constant regulatory subunit (PR65 or subunit A), that associates with a variety of regulatory subunits. Proteins that associate with the core dimer include three families of regulatory subunits B (the R2/B/PR55/B55, R3/B''/PR72/PR130/PR59 and R5/B'/B56 families), the 48 kDa variable regulatory subunit, viral proteins, and cell signaling molecules. Interacts with IPO9. Interacts with SGO1. Interacts with RAF1.

The PR65 subunit of protein phosphatase 2A serves as a scaffolding molecule to coordinate the assembly of the catalytic subunit and a variable regulatory B subunit. This chain is Serine/threonine-protein phosphatase 2A 65 kDa regulatory subunit A beta isoform (Ppp2r1b), found in Rattus norvegicus (Rat).